The primary structure comprises 450 residues: FAD-dependent monooxygenase okaB (450 aa).

A helical membrane pass occupies residues Ile-14–Gly-34. Glu-43 and Arg-116 together coordinate FAD. Arg-194 is an active-site residue. Asp-318 and Gly-331 together coordinate FAD.

Belongs to the paxM FAD-dependent monooxygenase family.

Its subcellular location is the membrane. It catalyses the reaction cyclo(N(8)-(alpha,alpha-dimethylallyl)-L-Trp-6a-(alpha,alpha-dimethylallyl)-L-Trp) + AH2 + O2 = okaramine C + A + H2O. It participates in alkaloid biosynthesis. Functionally, FAD-dependent monooxygenase; part of the gene cluster that mediates the biosynthesis of okaramine B, a prenylated indole alkaloid that possesses an unusual octacyclic ring system, including a four-membered azetidine ring and an eight-membered azocine ring, and that exhibits insecticidal activity against silkworm larvae. Within the pathway, okaC performs indole 2,3-epoxidation, facilitating the formation of the hexahydropyrrolo[2,3-b]indole (HPI) moiety of okaramine C. okaC then performs asymmetric reverse prenylation of cyclo(L-Trp-L-Trp) at N-1 and C-2' of the indole ring to produce the cyclic prenylated tryptophan dimer cyclo(N8-(alpha,alpha-dimethylallyl)-L-Trp-6a-(alpha,alpha-dime-thylallyl)-L-Trp). The biosynthesis begins with the NRPS okaA that condenses two tryptophan molecules into cyclo(L-Trp-L-Trp). Prenylation by the prenyltransferase okaC then leads to the formation of cyclo(N8-(alpha,alpha-dimethylallyl)-L-Trp-6a-(alpha,alpha-dime-thylallyl)-L-Trp). This is followed by indole 2,3-epoxidation by the FAD-dependent monooxygenase okaB to facilitate the formation of the hexahydropyrrolo[2,3-b]indole (HPI) moiety of okaramine C. The cytochrome P450 monooxygenase okaD then likely catalyzes formation of the eight-membered ring of okaramine A. The dioxygenase okaE further forms the unusual 2-dimethyl-3-methyl-azetidine ring to yield 12-deshydroxyl okaramine E, as well as the hydroxylation of 12-deshydroxyl okaramine E to produce okaramine E. The cytochrome P450 monoxygenase okaG converts 12-deshydroxyl okaramine E into 3-desmethyl okaramine B which is further methylated by the methyltransferase okaF into okaramine B. In a shunt pathway, okaG and okaF together are also able to convert okaramine E into okaramine D. Okaramine H is produced by nonenzymatic conversion from okaramine A. In Penicillium ochrochloron, this protein is FAD-dependent monooxygenase okaB.